Here is a 348-residue protein sequence, read N- to C-terminus: 4-hydroxy-3-methylbut-2-enyl diphosphate reductase (348 aa).

Residue Cys21 coordinates [4Fe-4S] cluster. Positions 50 and 86 each coordinate (2E)-4-hydroxy-3-methylbut-2-enyl diphosphate. Dimethylallyl diphosphate-binding residues include His50 and His86. Isopentenyl diphosphate-binding residues include His50 and His86. Cys108 is a [4Fe-4S] cluster binding site. His136 lines the (2E)-4-hydroxy-3-methylbut-2-enyl diphosphate pocket. His136 lines the dimethylallyl diphosphate pocket. His136 is a binding site for isopentenyl diphosphate. Glu138 serves as the catalytic Proton donor. (2E)-4-hydroxy-3-methylbut-2-enyl diphosphate is bound at residue Thr177. Residue Cys207 coordinates [4Fe-4S] cluster. Residues Ser235, Ser236, Asn237, and Ser280 each coordinate (2E)-4-hydroxy-3-methylbut-2-enyl diphosphate. Ser235, Ser236, Asn237, and Ser280 together coordinate dimethylallyl diphosphate. Isopentenyl diphosphate contacts are provided by Ser235, Ser236, Asn237, and Ser280.

The protein belongs to the IspH family. Requires [4Fe-4S] cluster as cofactor.

The catalysed reaction is isopentenyl diphosphate + 2 oxidized [2Fe-2S]-[ferredoxin] + H2O = (2E)-4-hydroxy-3-methylbut-2-enyl diphosphate + 2 reduced [2Fe-2S]-[ferredoxin] + 2 H(+). The enzyme catalyses dimethylallyl diphosphate + 2 oxidized [2Fe-2S]-[ferredoxin] + H2O = (2E)-4-hydroxy-3-methylbut-2-enyl diphosphate + 2 reduced [2Fe-2S]-[ferredoxin] + 2 H(+). It participates in isoprenoid biosynthesis; dimethylallyl diphosphate biosynthesis; dimethylallyl diphosphate from (2E)-4-hydroxy-3-methylbutenyl diphosphate: step 1/1. The protein operates within isoprenoid biosynthesis; isopentenyl diphosphate biosynthesis via DXP pathway; isopentenyl diphosphate from 1-deoxy-D-xylulose 5-phosphate: step 6/6. Its function is as follows. Catalyzes the conversion of 1-hydroxy-2-methyl-2-(E)-butenyl 4-diphosphate (HMBPP) into a mixture of isopentenyl diphosphate (IPP) and dimethylallyl diphosphate (DMAPP). Acts in the terminal step of the DOXP/MEP pathway for isoprenoid precursor biosynthesis. This chain is 4-hydroxy-3-methylbut-2-enyl diphosphate reductase, found in Agrobacterium fabrum (strain C58 / ATCC 33970) (Agrobacterium tumefaciens (strain C58)).